The chain runs to 57 residues: MTGAGTPSQGKKNKTTHVKCRRCGEKSYHKQKKVCASCGFGKSAKRRDYAWQSKQGE.

Zn(2+) is bound by residues cysteine 20, cysteine 23, cysteine 35, and cysteine 38. Residues 20–38 form a C4-type zinc finger; the sequence is CRRCGEKSYHKQKKVCASC.

The protein belongs to the eukaryotic ribosomal protein eL37 family. It depends on Zn(2+) as a cofactor.

Functionally, binds to the 23S rRNA. The polypeptide is Large ribosomal subunit protein eL37 (Natronomonas pharaonis (strain ATCC 35678 / DSM 2160 / CIP 103997 / JCM 8858 / NBRC 14720 / NCIMB 2260 / Gabara) (Halobacterium pharaonis)).